A 309-amino-acid polypeptide reads, in one-letter code: Foldase protein PrsA 2 (309 aa).

Positions 1–20 are cleaved as a signal peptide; that stretch reads MKYRLIGVGASLVVAVMLTG. The N-palmitoyl cysteine moiety is linked to residue Cys-21. Cys-21 carries the S-diacylglycerol cysteine lipid modification. Residues 137-232 form the PpiC domain; the sequence is MPMTTVQHIA…TADTKDKPTY (96 aa).

This sequence belongs to the PrsA family.

The protein resides in the cell membrane. It catalyses the reaction [protein]-peptidylproline (omega=180) = [protein]-peptidylproline (omega=0). In terms of biological role, plays a major role in protein secretion by helping the post-translocational extracellular folding of several secreted proteins. The polypeptide is Foldase protein PrsA 2 (prsA2) (Lactiplantibacillus plantarum (strain ATCC BAA-793 / NCIMB 8826 / WCFS1) (Lactobacillus plantarum)).